The following is a 243-amino-acid chain: NAD(P)H-quinone oxidoreductase subunit K (243 aa).

4 residues coordinate [4Fe-4S] cluster: C59, C60, C124, and C155.

This sequence belongs to the complex I 20 kDa subunit family. In terms of assembly, NDH-1 can be composed of about 15 different subunits; different subcomplexes with different compositions have been identified which probably have different functions. It depends on [4Fe-4S] cluster as a cofactor.

The protein resides in the cellular thylakoid membrane. It carries out the reaction a plastoquinone + NADH + (n+1) H(+)(in) = a plastoquinol + NAD(+) + n H(+)(out). The catalysed reaction is a plastoquinone + NADPH + (n+1) H(+)(in) = a plastoquinol + NADP(+) + n H(+)(out). In terms of biological role, NDH-1 shuttles electrons from an unknown electron donor, via FMN and iron-sulfur (Fe-S) centers, to quinones in the respiratory and/or the photosynthetic chain. The immediate electron acceptor for the enzyme in this species is believed to be plastoquinone. Couples the redox reaction to proton translocation, and thus conserves the redox energy in a proton gradient. Cyanobacterial NDH-1 also plays a role in inorganic carbon-concentration. This Picosynechococcus sp. (strain ATCC 27264 / PCC 7002 / PR-6) (Agmenellum quadruplicatum) protein is NAD(P)H-quinone oxidoreductase subunit K.